The chain runs to 101 residues: Urease subunit beta (101 aa).

It belongs to the urease beta subunit family. Heterotrimer of UreA (gamma), UreB (beta) and UreC (alpha) subunits. Three heterotrimers associate to form the active enzyme.

It localises to the cytoplasm. It catalyses the reaction urea + 2 H2O + H(+) = hydrogencarbonate + 2 NH4(+). The protein operates within nitrogen metabolism; urea degradation; CO(2) and NH(3) from urea (urease route): step 1/1. The polypeptide is Urease subunit beta (Sinorhizobium fredii (strain NBRC 101917 / NGR234)).